A 211-amino-acid chain; its full sequence is FMN-dependent NADH:quinone oxidoreductase 2 (211 aa).

FMN contacts are provided by residues serine 10 and 17 to 19; that span reads SRS.

The protein belongs to the azoreductase type 1 family. As to quaternary structure, homodimer. Requires FMN as cofactor.

The catalysed reaction is 2 a quinone + NADH + H(+) = 2 a 1,4-benzosemiquinone + NAD(+). The enzyme catalyses N,N-dimethyl-1,4-phenylenediamine + anthranilate + 2 NAD(+) = 2-(4-dimethylaminophenyl)diazenylbenzoate + 2 NADH + 2 H(+). Its function is as follows. Quinone reductase that provides resistance to thiol-specific stress caused by electrophilic quinones. In terms of biological role, also exhibits azoreductase activity. Catalyzes the reductive cleavage of the azo bond in aromatic azo compounds to the corresponding amines. The sequence is that of FMN-dependent NADH:quinone oxidoreductase 2 from Listeria innocua serovar 6a (strain ATCC BAA-680 / CLIP 11262).